The chain runs to 95 residues: Aspartyl/glutamyl-tRNA(Asn/Gln) amidotransferase subunit C (95 aa).

This sequence belongs to the GatC family. As to quaternary structure, heterotrimer of A, B and C subunits.

It catalyses the reaction L-glutamyl-tRNA(Gln) + L-glutamine + ATP + H2O = L-glutaminyl-tRNA(Gln) + L-glutamate + ADP + phosphate + H(+). The catalysed reaction is L-aspartyl-tRNA(Asn) + L-glutamine + ATP + H2O = L-asparaginyl-tRNA(Asn) + L-glutamate + ADP + phosphate + 2 H(+). In terms of biological role, allows the formation of correctly charged Asn-tRNA(Asn) or Gln-tRNA(Gln) through the transamidation of misacylated Asp-tRNA(Asn) or Glu-tRNA(Gln) in organisms which lack either or both of asparaginyl-tRNA or glutaminyl-tRNA synthetases. The reaction takes place in the presence of glutamine and ATP through an activated phospho-Asp-tRNA(Asn) or phospho-Glu-tRNA(Gln). The polypeptide is Aspartyl/glutamyl-tRNA(Asn/Gln) amidotransferase subunit C (Campylobacter curvus (strain 525.92)).